The primary structure comprises 171 residues: Peptide deformylase (171 aa).

Fe cation is bound by residues Cys-91 and His-133. The active site involves Glu-134. Fe cation is bound at residue His-137.

Belongs to the polypeptide deformylase family. The cofactor is Fe(2+).

It carries out the reaction N-terminal N-formyl-L-methionyl-[peptide] + H2O = N-terminal L-methionyl-[peptide] + formate. Functionally, removes the formyl group from the N-terminal Met of newly synthesized proteins. Requires at least a dipeptide for an efficient rate of reaction. N-terminal L-methionine is a prerequisite for activity but the enzyme has broad specificity at other positions. This is Peptide deformylase from Mannheimia succiniciproducens (strain KCTC 0769BP / MBEL55E).